Reading from the N-terminus, the 940-residue chain is Phosphoenolpyruvate carboxylase (940 aa).

Residues His-138 and Lys-603 contribute to the active site.

It belongs to the PEPCase type 1 family. Mg(2+) serves as cofactor.

It carries out the reaction oxaloacetate + phosphate = phosphoenolpyruvate + hydrogencarbonate. In terms of biological role, forms oxaloacetate, a four-carbon dicarboxylic acid source for the tricarboxylic acid cycle. In Streptococcus thermophilus (strain ATCC BAA-250 / LMG 18311), this protein is Phosphoenolpyruvate carboxylase.